The following is a 1450-amino-acid chain: M-protein, striated muscle (1450 aa).

The segment at 66-87 (AHEAMQESRKRTHEQKSHASDE) is disordered. Ig-like C2-type domains are found at residues 142–233 (PEIL…CAVV) and 254–359 (PLSY…AFLF). Fibronectin type-III domains follow at residues 373 to 468 (APMD…ALDP), 501 to 596 (PPTN…PQDI), 602 to 695 (APGR…VQAA), 698 to 800 (CPSY…TMPE), and 803 to 900 (PAYD…ASPG). Ig-like C2-type domains follow at residues 899 to 995 (PGTK…LMTL), 1002 to 1115 (PTIP…FLRK), 1118 to 1204 (PHFS…LELS), 1225 to 1322 (PLKI…QRLK), and 1333 to 1422 (KVIG…VTVS).

In terms of tissue distribution, expressed in pectoralis and cardiac muscle.

Functionally, is a structural constituent of myofibrillar M-band in striated muscle. The protein is M-protein, striated muscle of Gallus gallus (Chicken).